Reading from the N-terminus, the 399-residue chain is Phosphoglycerate kinase (399 aa).

Substrate-binding positions include Asp22–Asn24, Arg38, His61–Arg64, Arg120, and Arg153. Residues Lys204, Glu326, and Gly352 to Thr355 contribute to the ATP site.

The protein belongs to the phosphoglycerate kinase family. As to quaternary structure, monomer.

The protein resides in the cytoplasm. The enzyme catalyses (2R)-3-phosphoglycerate + ATP = (2R)-3-phospho-glyceroyl phosphate + ADP. The protein operates within carbohydrate degradation; glycolysis; pyruvate from D-glyceraldehyde 3-phosphate: step 2/5. This chain is Phosphoglycerate kinase, found in Pelobacter propionicus (strain DSM 2379 / NBRC 103807 / OttBd1).